A 415-amino-acid chain; its full sequence is tRNA(Ile2) 2-agmatinylcytidine synthetase TiaS (415 aa).

It belongs to the TiaS family.

Its subcellular location is the cytoplasm. It catalyses the reaction cytidine(34) in tRNA(Ile2) + agmatine + ATP + H2O = 2-agmatinylcytidine(34) in tRNA(Ile2) + AMP + 2 phosphate + 2 H(+). ATP-dependent agmatine transferase that catalyzes the formation of 2-agmatinylcytidine (agm2C) at the wobble position (C34) of tRNA(Ile2), converting the codon specificity from AUG to AUA. The polypeptide is tRNA(Ile2) 2-agmatinylcytidine synthetase TiaS (Methanocorpusculum labreanum (strain ATCC 43576 / DSM 4855 / Z)).